Here is a 276-residue protein sequence, read N- to C-terminus: Undecaprenyl-diphosphatase 2 (276 aa).

Transmembrane regions (helical) follow at residues 3–23 (IWDIIVAIILGIVEGLTEYAP), 48–68 (AANTFKVVIQLGSILAVAFVF), 92–112 (LSIAQIAVGLVPAAVLGFLFE), 119–139 (LFSVRTVAVGLIAGAVLMLAA), 196–216 (ADFTFIMAIPIMMGASLLSLI), 225–245 (DLLPFFIAGFISAFIVALFVV), and 255–275 (IKLVPFAIYRIVLGLLLFILF).

The protein belongs to the UppP family.

It is found in the cell membrane. The catalysed reaction is di-trans,octa-cis-undecaprenyl diphosphate + H2O = di-trans,octa-cis-undecaprenyl phosphate + phosphate + H(+). Its function is as follows. Catalyzes the dephosphorylation of undecaprenyl diphosphate (UPP). Confers resistance to bacitracin. In Bacillus licheniformis (strain ATCC 14580 / DSM 13 / JCM 2505 / CCUG 7422 / NBRC 12200 / NCIMB 9375 / NCTC 10341 / NRRL NRS-1264 / Gibson 46), this protein is Undecaprenyl-diphosphatase 2.